The chain runs to 380 residues: MAPNPRKSHPLLKMINNSLIDLPTPSNISAWWNFGSLLALCLMTQILTGLLLAMHYTADTTLAFSSVAHTCRDVQYGWLIRNMHANGASFFFICIYLHIGRGFYYGSYLHKETWNTGVLLLLTLMATAFVGYVLPWGQMSFWGATVITNMFSAIPYIGQTIVEWAWGGFSVDNPTLTRFFALHFLLPFMIAGLTLIHLTFLHESGSNNPLGIVSNCDKIPFHPYYSLKDILGLALLLLPLTTMALFSPNLLGDPENFTPANPLVTPPHIKPEWYFLFAYAILRSIPNKLGGVLALAASVLVLFLSPLLHKSKQRTMAFRPLSQLLFWALVANLLILTWIGSQPVEHPFIIIGQLASTTYFIILLILFPITSALENKMLNF.

4 consecutive transmembrane segments (helical) span residues 34–54 (FGSL…LLAM), 78–99 (WLIR…YLHI), 114–134 (WNTG…GYVL), and 179–199 (FFAL…IHLT). Heme b contacts are provided by His-84 and His-98. Residues His-183 and His-197 each contribute to the heme b site. His-202 is a binding site for a ubiquinone. 4 helical membrane-spanning segments follow: residues 227-247 (LKDI…ALFS), 289-309 (LGGV…PLLH), 321-341 (LSQL…WIGS), and 348-368 (FIII…ILFP).

The protein belongs to the cytochrome b family. In terms of assembly, the cytochrome bc1 complex contains 11 subunits: 3 respiratory subunits (MT-CYB, CYC1 and UQCRFS1), 2 core proteins (UQCRC1 and UQCRC2) and 6 low-molecular weight proteins (UQCRH/QCR6, UQCRB/QCR7, UQCRQ/QCR8, UQCR10/QCR9, UQCR11/QCR10 and a cleavage product of UQCRFS1). This cytochrome bc1 complex then forms a dimer. It depends on heme b as a cofactor.

The protein resides in the mitochondrion inner membrane. Its function is as follows. Component of the ubiquinol-cytochrome c reductase complex (complex III or cytochrome b-c1 complex) that is part of the mitochondrial respiratory chain. The b-c1 complex mediates electron transfer from ubiquinol to cytochrome c. Contributes to the generation of a proton gradient across the mitochondrial membrane that is then used for ATP synthesis. The protein is Cytochrome b (MT-CYB) of Oceanodroma microsoma (Least storm petrel).